Consider the following 702-residue polypeptide: Dynein intermediate chain 2, ciliary (702 aa).

Positions methionine 1–glycine 11 are enriched in low complexity. Disordered regions lie at residues methionine 1–aspartate 64, aspartate 128–threonine 226, and glutamine 243–serine 272. Basic and acidic residues-rich tracts occupy residues glycine 36 to glutamate 52 and glycine 152 to glutamate 176. A compositionally biased stretch (polar residues) spans lysine 189–asparagine 206. Over residues glutamine 243 to serine 261 the composition is skewed to basic and acidic residues. WD repeat units lie at residues proline 380–valine 420, lysine 429–threonine 472, threonine 490–aspartate 533, alanine 537–phenylalanine 577, aspartate 580–isoleucine 620, and lysine 628–proline 667.

It belongs to the dynein intermediate chain family. In terms of assembly, consists of at least two heavy chains (alpha and beta), three intermediate chains and several light chains.

The protein localises to the cytoplasm. It is found in the cytoskeleton. Its subcellular location is the cilium axoneme. Its function is as follows. Microtubule-binding protein that may be involved in dynein outer arm assembly on the axoneme. The protein is Dynein intermediate chain 2, ciliary of Heliocidaris crassispina (Sea urchin).